The chain runs to 532 residues: D-arabinono-1,4-lactone oxidase (532 aa).

An FAD-binding PCMH-type domain is found at Tyr-25–Ala-199. A Pros-8alpha-FAD histidine modification is found at His-62.

This sequence belongs to the oxygen-dependent FAD-linked oxidoreductase family. It depends on FAD as a cofactor.

Its subcellular location is the mitochondrion membrane. The catalysed reaction is D-arabinono-1,4-lactone + O2 = dehydro-D-arabinono-1,4-lactone + H2O2 + H(+). It functions in the pathway cofactor biosynthesis; D-erythroascorbate biosynthesis; dehydro-D-arabinono-1,4-lactone from D-arabinose: step 2/2. The sequence is that of D-arabinono-1,4-lactone oxidase (ALO1) from Eremothecium gossypii (strain ATCC 10895 / CBS 109.51 / FGSC 9923 / NRRL Y-1056) (Yeast).